The primary structure comprises 514 residues: Probable type III restriction-modification enzyme HindVIP Res subunit (514 aa).

This sequence belongs to the type III restriction-modification system Res protein family. In terms of assembly, contains two different subunits: Res and Mod. Mg(2+) serves as cofactor. Requires S-adenosyl-L-methionine as cofactor.

It carries out the reaction Endonucleolytic cleavage of DNA to give specific double-stranded fragments with terminal 5'-phosphates.. In terms of biological role, a type III restriction enzyme that recognizes 2 inversely oriented double-stranded sequences 5'-CGAAT-3' and cleaves 25-27 base pairs downstream. After binding to one recognition site undergoes random one-dimensional diffusion along DNA until it collides with a stationary enzyme bound to the second DNA site, which is when DNA cleavage occurs. DNA restriction requires both the Res and Mod subunits. In Haemophilus influenzae (strain ATCC 51907 / DSM 11121 / KW20 / Rd), this protein is Probable type III restriction-modification enzyme HindVIP Res subunit.